A 789-amino-acid polypeptide reads, in one-letter code: Polyribonucleotide nucleotidyltransferase (789 aa).

Mg(2+)-binding residues include D494 and D500. In terms of domain architecture, KH spans 561–620; it reads PRIESIFINKDKIRNVIGSGGKNIREICEKTGARVEIMQDGTVMIYAINNDAVEYAKNMI. An S1 motif domain is found at 630–697; that stretch reads GKVFDGTVIE…DREYVQLSMR (68 aa). The segment at 709–789 is disordered; sequence GELYNIRKTN…NEVPRKPRFF (81 aa). Residues 737 to 749 are compositionally biased toward basic residues; it reads SEKKRRGSGRSRR. Low complexity predominate over residues 763-780; the sequence is NNGFGNGNRSFNDNRNGN.

This sequence belongs to the polyribonucleotide nucleotidyltransferase family. It depends on Mg(2+) as a cofactor.

The protein localises to the cytoplasm. The enzyme catalyses RNA(n+1) + phosphate = RNA(n) + a ribonucleoside 5'-diphosphate. In terms of biological role, involved in mRNA degradation. Catalyzes the phosphorolysis of single-stranded polyribonucleotides processively in the 3'- to 5'-direction. The chain is Polyribonucleotide nucleotidyltransferase from Ehrlichia ruminantium (strain Gardel).